A 367-amino-acid chain; its full sequence is Epoxide hydrolase 3 (367 aa).

The helical transmembrane segment at 22-42 threads the bilayer; sequence ALVMSLVYLAALVAAFVYSCI. Aspartate 180 serves as the catalytic Nucleophile. Catalysis depends on tyrosine 288, which acts as the Proton donor. Histidine 344 (proton acceptor) is an active-site residue.

This sequence belongs to the AB hydrolase superfamily. Epoxide hydrolase family. In terms of tissue distribution, predominantly expressed in skin, esophagus, lung and tongue and to a lesser extent in pancreas and eye.

It is found in the microsome membrane. It catalyses the reaction an epoxide + H2O = an ethanediol. The catalysed reaction is 9,10-epoxyoctadecanoate + H2O = 9,10-dihydroxyoctadecanoate. The enzyme catalyses 9,10-epoxy-(12Z)-octadecenoate + H2O = 9,10-dihydroxy-(12Z)-octadecenoate. It carries out the reaction 8,9-epoxy-(5Z,11Z,14Z)-eicosatrienoate + H2O = 8,9-dihydroxy-(5Z,11Z,14Z)-eicosatrienoate. It catalyses the reaction 11,12-epoxy-(5Z,8Z,14Z)-eicosatrienoate + H2O = 11,12-dihydroxy-(5Z,8Z,14Z)-eicosatrienoate. The catalysed reaction is 14,15-epoxy-(5Z,8Z,11Z)-eicosatrienoate + H2O = 14,15-dihydroxy-(5Z,8Z,11Z)-eicosatrienoate. With respect to regulation, inhibited by 1-(1-acetylpiperidin-4-yl)-3-(4-(trifl uoromethoxy)phenyl)urea (TPAU), 1-cyclohexyl-3-dodecylurea (CDU), 12-(3-adamantan-1-yl-ureido)-dodecanoic acid (AUDA), 1-((3S, 5S, 7S)-adamantan-1-yl)-3-(5-(2-(2-ethoxyethoxy) ethoxy)pentyl)urea (AEPU) and to a lesser extent by 8-(3-((3S, 5S, 7S)-adamantan-1-yl)ureido) octanoic acid (AUOA). Its function is as follows. Catalyzes the hydrolysis of epoxide-containing fatty acids. Active in vitro against epoxyeicosatrienoic acids (EETs) including 8,9-EET, 9,10-EET, 11,12-EET and 14,15-EET and leukotoxin. In Mus musculus (Mouse), this protein is Epoxide hydrolase 3 (Ephx3).